The sequence spans 385 residues: Putative transport protein BpOF4_00890 (385 aa).

8 helical membrane passes run 42–62 (TIWI…ILPV), 63–83 (SLPL…VNAL), 93–113 (VAVM…GYYI), 191–211 (SIPG…LFML), 255–275 (IIIF…VALL), 276–296 (MAFI…VILA), 304–324 (IVGD…LLII), and 350–370 (LGLM…VIAF).

This sequence belongs to the autoinducer-2 exporter (AI-2E) (TC 2.A.86) family.

It localises to the cell membrane. This is Putative transport protein BpOF4_00890 from Alkalihalophilus pseudofirmus (strain ATCC BAA-2126 / JCM 17055 / OF4) (Bacillus pseudofirmus).